The chain runs to 207 residues: Holliday junction branch migration complex subunit RuvA (207 aa).

A domain I region spans residues 1–65 (MYDYIRGVLT…ETEHVLYGFH (65 aa)). Residues 66-144 (TRGERECFRM…DLLPLDAQIL (79 aa)) are domain II. Positions 145–155 (ASWEPAKPSCM) are flexible linker. The interval 155 to 207 (MEEGIQALAALGYPKSSAERMIAEAMSELPDHASVAEILPIALKKNLQGLNKI) is domain III.

It belongs to the RuvA family. Homotetramer. Forms an RuvA(8)-RuvB(12)-Holliday junction (HJ) complex. HJ DNA is sandwiched between 2 RuvA tetramers; dsDNA enters through RuvA and exits via RuvB. An RuvB hexamer assembles on each DNA strand where it exits the tetramer. Each RuvB hexamer is contacted by two RuvA subunits (via domain III) on 2 adjacent RuvB subunits; this complex drives branch migration. In the full resolvosome a probable DNA-RuvA(4)-RuvB(12)-RuvC(2) complex forms which resolves the HJ.

Its subcellular location is the cytoplasm. In terms of biological role, the RuvA-RuvB-RuvC complex processes Holliday junction (HJ) DNA during genetic recombination and DNA repair, while the RuvA-RuvB complex plays an important role in the rescue of blocked DNA replication forks via replication fork reversal (RFR). RuvA specifically binds to HJ cruciform DNA, conferring on it an open structure. The RuvB hexamer acts as an ATP-dependent pump, pulling dsDNA into and through the RuvAB complex. HJ branch migration allows RuvC to scan DNA until it finds its consensus sequence, where it cleaves and resolves the cruciform DNA. This Chlamydia abortus (strain DSM 27085 / S26/3) (Chlamydophila abortus) protein is Holliday junction branch migration complex subunit RuvA.